The primary structure comprises 242 residues: Anti-Pycsar protein Apyc1 (242 aa).

Positions 17–216 (FNNNALIEQD…EMQSIIKLMH (200 aa)) are beta-lactamase-like. 7 residues coordinate Zn(2+): H59, H61, D63, H64, H142, D162, and H216.

Belongs to the anti-Pycsar protein Apyc1 family. Homodimer. Requires Zn(2+) as cofactor.

It carries out the reaction 3',5'-cyclic CMP + H2O = CMP + H(+). It catalyses the reaction 3',5'-cyclic UMP + H2O = UMP + H(+). Its function is as follows. Counteracts the endogenous Pycsar antiviral defense system. Phosphodiesterase that enables metal-dependent hydrolysis of host cyclic nucleotide Pycsar defense signals such as cCMP and cUMP. This is Anti-Pycsar protein Apyc1 from Saccharibacillus brassicae.